Consider the following 303-residue polypeptide: Putative ankyrin repeat protein R601 (303 aa).

4 ANK repeats span residues 86–115 (DDNM…DVTV), 117–146 (NNFA…DITV), 147–176 (DNYF…NVDS), and 200–233 (NADV…DVSY).

The polypeptide is Putative ankyrin repeat protein R601 (Acanthamoeba polyphaga (Amoeba)).